Reading from the N-terminus, the 76-residue chain is Small proline-rich protein 2I (76 aa).

3 repeat units span residues 21 to 29 (KKCPEPCPP), 30 to 38 (PQCPEPCPP), and 39 to 47 (PKCPEPCPE). Residues 21–47 (KKCPEPCPPPQCPEPCPPPKCPEPCPE) are 3 X 9 AA approximate tandem repeats. Over residues 40–53 (KCPEPCPESCPPPS) the composition is skewed to pro residues. The segment at 40 to 76 (KCPEPCPESCPPPSYQQKCPPVQPPPPCQQKCPPKSK) is disordered.

Belongs to the cornifin (SPRR) family. As to expression, not expressed in uterus.

It is found in the cytoplasm. Cross-linked envelope protein of keratinocytes. It is a keratinocyte protein that first appears in the cell cytosol, but ultimately becomes cross-linked to membrane proteins by transglutaminase. All that results in the formation of an insoluble envelope beneath the plasma membrane. This is Small proline-rich protein 2I (Sprr2i) from Mus musculus (Mouse).